The primary structure comprises 88 residues: Small ribosomal subunit protein uS17 (88 aa).

This sequence belongs to the universal ribosomal protein uS17 family. Part of the 30S ribosomal subunit.

Its function is as follows. One of the primary rRNA binding proteins, it binds specifically to the 5'-end of 16S ribosomal RNA. In Oleidesulfovibrio alaskensis (strain ATCC BAA-1058 / DSM 17464 / G20) (Desulfovibrio alaskensis), this protein is Small ribosomal subunit protein uS17.